Reading from the N-terminus, the 1468-residue chain is ABC transporter G family member 34 (1468 aa).

Positions 33-53 are disordered; that stretch reads NGAFSRSSSSSSRRMRGEEDD. The ABC transporter 1 domain maps to 178 to 450; it reads ANALGILPTR…FELMGFKCPE (273 aa). Position 211–218 (211–218) interacts with ATP; the sequence is GPPGSGKT. The ABC transmembrane type-2 1 domain maps to 528–741; sequence ELLKANIDRE…AQNAVSVNEF (214 aa). The next 6 helical transmembrane spans lie at 546 to 566, 575 to 595, 634 to 654, 666 to 686, 690 to 710, and 778 to 798; these read FVYI…MTVF, SVAD…MIML, SPMS…VIGF, LLML…GGAA, IVAN…GGFI, and IGFG…TLAL. One can recognise an ABC transporter 2 domain in the interval 871–1123; that stretch reads LTFEDIKYSV…ELIKYFEGIQ (253 aa). Position 916-923 (916-923) interacts with ATP; it reads GVSGAGKT. Residues 1196 to 1410 form the ABC transmembrane type-2 2 domain; it reads IQCLACLWKQ…TLYGLIVSQY (215 aa). Transmembrane regions (helical) follow at residues 1217–1237, 1247–1267, 1303–1323, 1330–1350, 1360–1380, 1387–1407, and 1440–1460; these read AIRL…FWDL, LFNA…LNGQ, FPYT…MIGF, FFWY…YGMM, VASI…GFVI, VWWR…GLIV, and FVAV…GFAI.

This sequence belongs to the ABC transporter superfamily. ABCG family. PDR (TC 3.A.1.205) subfamily.

The protein resides in the membrane. May be a general defense protein. In Oryza sativa subsp. japonica (Rice), this protein is ABC transporter G family member 34.